A 244-amino-acid polypeptide reads, in one-letter code: Protein A47 (244 aa).

It belongs to the orthopoxvirus A47 protein family.

This Homo sapiens (Human) protein is Protein A47.